The sequence spans 534 residues: NAD(P)H-quinone oxidoreductase chain 4 (534 aa).

14 helical membrane passes run 6–26 (FPWL…LPFI), 38–58 (WYAL…FYTQ), 91–111 (MPLI…SWPV), 117–137 (LFYF…AVQD), 138–158 (LLVF…LLSI), 171–191 (FILY…AMAF), 214–234 (LLCY…VPLH), 245–265 (TAPV…YALI), 279–299 (FAPA…LTSF), 316–336 (MGFV…GAVL), 337–357 (QMVS…ATYD), 377–399 (IFAM…GFVA), 419–439 (VPVV…LLSM), and 466–486 (IFVI…PKII).

This sequence belongs to the complex I subunit 4 family.

It is found in the cellular thylakoid membrane. It carries out the reaction a plastoquinone + NADH + (n+1) H(+)(in) = a plastoquinol + NAD(+) + n H(+)(out). It catalyses the reaction a plastoquinone + NADPH + (n+1) H(+)(in) = a plastoquinol + NADP(+) + n H(+)(out). In terms of biological role, NDH-1 shuttles electrons from NAD(P)H, via FMN and iron-sulfur (Fe-S) centers, to quinones in the respiratory chain. The immediate electron acceptor for the enzyme in this species is believed to be plastoquinone. Couples the redox reaction to proton translocation (for every two electrons transferred, four hydrogen ions are translocated across the cytoplasmic membrane), and thus conserves the redox energy in a proton gradient. This Acaryochloris marina (strain MBIC 11017) protein is NAD(P)H-quinone oxidoreductase chain 4.